A 598-amino-acid polypeptide reads, in one-letter code: NADH-quinone oxidoreductase subunit C/D (598 aa).

The segment at 1-189 is NADH dehydrogenase I subunit C; the sequence is MTDLTTSDSL…DPYVLTKQKE (189 aa). Residues 213-598 form an NADH dehydrogenase I subunit D region; the sequence is DFMFLNLGPN…IDFVMSDVDR (386 aa).

The protein in the N-terminal section; belongs to the complex I 30 kDa subunit family. This sequence in the C-terminal section; belongs to the complex I 49 kDa subunit family. In terms of assembly, NDH-1 is composed of 13 different subunits. Subunits NuoB, CD, E, F, and G constitute the peripheral sector of the complex.

The protein localises to the cell inner membrane. It carries out the reaction a quinone + NADH + 5 H(+)(in) = a quinol + NAD(+) + 4 H(+)(out). Its function is as follows. NDH-1 shuttles electrons from NADH, via FMN and iron-sulfur (Fe-S) centers, to quinones in the respiratory chain. The immediate electron acceptor for the enzyme in this species is believed to be ubiquinone. Couples the redox reaction to proton translocation (for every two electrons transferred, four hydrogen ions are translocated across the cytoplasmic membrane), and thus conserves the redox energy in a proton gradient. The sequence is that of NADH-quinone oxidoreductase subunit C/D from Yersinia pestis bv. Antiqua (strain Angola).